The sequence spans 340 residues: 4-hydroxy-3-methylbut-2-enyl diphosphate reductase (340 aa).

Residue Cys-18 coordinates [4Fe-4S] cluster. His-47 and His-83 together coordinate (2E)-4-hydroxy-3-methylbut-2-enyl diphosphate. The dimethylallyl diphosphate site is built by His-47 and His-83. Residues His-47 and His-83 each contribute to the isopentenyl diphosphate site. Cys-105 serves as a coordination point for [4Fe-4S] cluster. His-133 lines the (2E)-4-hydroxy-3-methylbut-2-enyl diphosphate pocket. Residue His-133 participates in dimethylallyl diphosphate binding. His-133 serves as a coordination point for isopentenyl diphosphate. The active-site Proton donor is the Glu-135. Thr-174 is a binding site for (2E)-4-hydroxy-3-methylbut-2-enyl diphosphate. [4Fe-4S] cluster is bound at residue Cys-204. (2E)-4-hydroxy-3-methylbut-2-enyl diphosphate is bound by residues Ser-232, Ser-233, Asn-234, and Ser-277. Ser-232, Ser-233, Asn-234, and Ser-277 together coordinate dimethylallyl diphosphate. Isopentenyl diphosphate contacts are provided by Ser-232, Ser-233, Asn-234, and Ser-277.

This sequence belongs to the IspH family. The cofactor is [4Fe-4S] cluster.

The enzyme catalyses isopentenyl diphosphate + 2 oxidized [2Fe-2S]-[ferredoxin] + H2O = (2E)-4-hydroxy-3-methylbut-2-enyl diphosphate + 2 reduced [2Fe-2S]-[ferredoxin] + 2 H(+). It catalyses the reaction dimethylallyl diphosphate + 2 oxidized [2Fe-2S]-[ferredoxin] + H2O = (2E)-4-hydroxy-3-methylbut-2-enyl diphosphate + 2 reduced [2Fe-2S]-[ferredoxin] + 2 H(+). It functions in the pathway isoprenoid biosynthesis; dimethylallyl diphosphate biosynthesis; dimethylallyl diphosphate from (2E)-4-hydroxy-3-methylbutenyl diphosphate: step 1/1. The protein operates within isoprenoid biosynthesis; isopentenyl diphosphate biosynthesis via DXP pathway; isopentenyl diphosphate from 1-deoxy-D-xylulose 5-phosphate: step 6/6. Its function is as follows. Catalyzes the conversion of 1-hydroxy-2-methyl-2-(E)-butenyl 4-diphosphate (HMBPP) into a mixture of isopentenyl diphosphate (IPP) and dimethylallyl diphosphate (DMAPP). Acts in the terminal step of the DOXP/MEP pathway for isoprenoid precursor biosynthesis. This chain is 4-hydroxy-3-methylbut-2-enyl diphosphate reductase, found in Bartonella quintana (strain Toulouse) (Rochalimaea quintana).